Consider the following 305-residue polypeptide: Glycine cleavage system transcriptional activator (305 aa).

The 58-residue stretch at 6-63 (PPLNALRVFDAAARHLSFTRAAEELFVTQAAVSHQIKSLEDFLGLKLFRRRNRSLLLT) folds into the HTH lysR-type domain. A DNA-binding region (H-T-H motif) is located at residues 23 to 42 (FTRAAEELFVTQAAVSHQIK).

It belongs to the LysR transcriptional regulatory family.

The protein resides in the cytoplasm. Regulatory protein for the glycine cleavage system operon (gcv). Mediates activation of gcv by glycine and repression by purines. GcvA is negatively autoregulated. Binds to three sites upstream of the gcv promoter. This chain is Glycine cleavage system transcriptional activator (gcvA), found in Escherichia coli O157:H7.